Reading from the N-terminus, the 139-residue chain is Small ribosomal subunit protein uS11 (139 aa).

Disordered regions lie at residues 1–33 (MPPAKKGPATSARKGQKTRRREKKNVPHGAAHI) and 118–139 (GAISDVTPQPHNGVRPPKRRRV). The span at 14 to 23 (KGQKTRRREK) shows a compositional bias: basic residues.

Belongs to the universal ribosomal protein uS11 family. In terms of assembly, part of the 30S ribosomal subunit. Interacts with proteins S7 and S18. Binds to IF-3.

In terms of biological role, located on the platform of the 30S subunit, it bridges several disparate RNA helices of the 16S rRNA. Forms part of the Shine-Dalgarno cleft in the 70S ribosome. This Mycobacterium tuberculosis (strain ATCC 25177 / H37Ra) protein is Small ribosomal subunit protein uS11.